We begin with the raw amino-acid sequence, 359 residues long: Histidinol-phosphate aminotransferase (359 aa).

Residue Lys217 is modified to N6-(pyridoxal phosphate)lysine.

This sequence belongs to the class-II pyridoxal-phosphate-dependent aminotransferase family. Histidinol-phosphate aminotransferase subfamily. Homodimer. Pyridoxal 5'-phosphate is required as a cofactor.

The enzyme catalyses L-histidinol phosphate + 2-oxoglutarate = 3-(imidazol-4-yl)-2-oxopropyl phosphate + L-glutamate. Its pathway is amino-acid biosynthesis; L-histidine biosynthesis; L-histidine from 5-phospho-alpha-D-ribose 1-diphosphate: step 7/9. The polypeptide is Histidinol-phosphate aminotransferase (Salmonella newport (strain SL254)).